The following is a 407-amino-acid chain: Dual-specificity RNA methyltransferase RlmN (407 aa).

The Proton acceptor role is filled by E136. Positions 144–378 (REDRGAVCIS…MDAGFASPIR (235 aa)) constitute a Radical SAM core domain. A disulfide bridge connects residues C151 and C389. C158, C162, and C165 together coordinate [4Fe-4S] cluster. Residues 215–216 (GE), S247, 269–271 (SLH), and N346 each bind S-adenosyl-L-methionine. Catalysis depends on C389, which acts as the S-methylcysteine intermediate.

This sequence belongs to the radical SAM superfamily. RlmN family. [4Fe-4S] cluster is required as a cofactor.

It is found in the cytoplasm. The catalysed reaction is adenosine(2503) in 23S rRNA + 2 reduced [2Fe-2S]-[ferredoxin] + 2 S-adenosyl-L-methionine = 2-methyladenosine(2503) in 23S rRNA + 5'-deoxyadenosine + L-methionine + 2 oxidized [2Fe-2S]-[ferredoxin] + S-adenosyl-L-homocysteine. The enzyme catalyses adenosine(37) in tRNA + 2 reduced [2Fe-2S]-[ferredoxin] + 2 S-adenosyl-L-methionine = 2-methyladenosine(37) in tRNA + 5'-deoxyadenosine + L-methionine + 2 oxidized [2Fe-2S]-[ferredoxin] + S-adenosyl-L-homocysteine. Its function is as follows. Specifically methylates position 2 of adenine 2503 in 23S rRNA and position 2 of adenine 37 in tRNAs. m2A2503 modification seems to play a crucial role in the proofreading step occurring at the peptidyl transferase center and thus would serve to optimize ribosomal fidelity. The protein is Dual-specificity RNA methyltransferase RlmN of Gluconobacter oxydans (strain 621H) (Gluconobacter suboxydans).